The chain runs to 260 residues: 3-alpha-(or 20-beta)-hydroxysteroid dehydrogenase (260 aa).

Arginine 17, methionine 19, aspartate 38, aspartate 61, valine 62, asparagine 88, tyrosine 153, lysine 157, valine 186, threonine 188, and threonine 191 together coordinate NAD(+). Tyrosine 153 serves as the catalytic Proton acceptor.

It belongs to the short-chain dehydrogenases/reductases (SDR) family. As to quaternary structure, homotetramer.

The enzyme catalyses androstan-3alpha,17beta-diol + NAD(+) = 17beta-hydroxyandrostanone + NADH + H(+). It functions in the pathway lipid metabolism; steroid degradation. In terms of biological role, probably involved in steroid metabolism. This is 3-alpha-(or 20-beta)-hydroxysteroid dehydrogenase (fabG3) from Mycobacterium tuberculosis (strain CDC 1551 / Oshkosh).